The chain runs to 152 residues: Transcriptional regulator MraZ (152 aa).

SpoVT-AbrB domains are found at residues 5 to 52 and 81 to 124; these read ANAI…PLNE and ATES…DEDM.

The protein belongs to the MraZ family. In terms of assembly, forms oligomers.

It is found in the cytoplasm. It localises to the nucleoid. The sequence is that of Transcriptional regulator MraZ from Psychromonas ingrahamii (strain DSM 17664 / CCUG 51855 / 37).